A 255-amino-acid chain; its full sequence is Zinc import ATP-binding protein ZnuC 1 (255 aa).

An ABC transporter domain is found at 7–220 (IRLQDVTVKI…PAFINLFGTQ (214 aa)). Residue 39-46 (GPNGAGKS) coordinates ATP. A disordered region spans residues 229–255 (HHHHDHHHHTDGTVAAGSECSHGDQHA).

It belongs to the ABC transporter superfamily. Zinc importer (TC 3.A.1.15.5) family. As to quaternary structure, the complex is composed of two ATP-binding proteins (ZnuC), two transmembrane proteins (ZnuB) and a solute-binding protein (ZnuA).

Its subcellular location is the cell inner membrane. It carries out the reaction Zn(2+)(out) + ATP(in) + H2O(in) = Zn(2+)(in) + ADP(in) + phosphate(in) + H(+)(in). Functionally, part of the ABC transporter complex ZnuABC involved in zinc import. Responsible for energy coupling to the transport system. The sequence is that of Zinc import ATP-binding protein ZnuC 1 from Hahella chejuensis (strain KCTC 2396).